Reading from the N-terminus, the 150-residue chain is Small ribosomal subunit protein uS19y (150 aa).

This sequence belongs to the universal ribosomal protein uS19 family.

Its subcellular location is the cytoplasm. In Arabidopsis thaliana (Mouse-ear cress), this protein is Small ribosomal subunit protein uS19y (RPS15C).